A 249-amino-acid chain; its full sequence is 3-deoxy-manno-octulosonate cytidylyltransferase (249 aa).

The protein belongs to the KdsB family.

The protein resides in the cytoplasm. It catalyses the reaction 3-deoxy-alpha-D-manno-oct-2-ulosonate + CTP = CMP-3-deoxy-beta-D-manno-octulosonate + diphosphate. Its pathway is nucleotide-sugar biosynthesis; CMP-3-deoxy-D-manno-octulosonate biosynthesis; CMP-3-deoxy-D-manno-octulosonate from 3-deoxy-D-manno-octulosonate and CTP: step 1/1. It participates in bacterial outer membrane biogenesis; lipopolysaccharide biosynthesis. Functionally, activates KDO (a required 8-carbon sugar) for incorporation into bacterial lipopolysaccharide in Gram-negative bacteria. This chain is 3-deoxy-manno-octulosonate cytidylyltransferase, found in Aliivibrio fischeri (strain ATCC 700601 / ES114) (Vibrio fischeri).